A 352-amino-acid chain; its full sequence is uncharacterized protein (352 aa).

The signal sequence occupies residues 1–21; the sequence is MNVDSRVFRFFLVFLILVVVA.

This sequence belongs to the bacterial solute-binding protein 1 family. WtpA subfamily.

This is an uncharacterized protein from Methanosarcina acetivorans (strain ATCC 35395 / DSM 2834 / JCM 12185 / C2A).